The following is a 342-amino-acid chain: Ribosomal RNA small subunit methyltransferase C (342 aa).

This sequence belongs to the methyltransferase superfamily. RsmC family. As to quaternary structure, monomer.

Its subcellular location is the cytoplasm. It carries out the reaction guanosine(1207) in 16S rRNA + S-adenosyl-L-methionine = N(2)-methylguanosine(1207) in 16S rRNA + S-adenosyl-L-homocysteine + H(+). Specifically methylates the guanine in position 1207 of 16S rRNA in the 30S particle. The polypeptide is Ribosomal RNA small subunit methyltransferase C (Erwinia tasmaniensis (strain DSM 17950 / CFBP 7177 / CIP 109463 / NCPPB 4357 / Et1/99)).